We begin with the raw amino-acid sequence, 301 residues long: Mitochondrial carnitine/acylcarnitine carrier protein (301 aa).

An N-acetylalanine modification is found at Ala-2. Residues 2 to 12 lie on the Cytoplasmic side of the membrane; the sequence is ADQPKPISPLK. 3 Solcar repeats span residues 8–99, 108–196, and 207–293; these read ISPL…GKKL, LSYP…VKNI, and LSVP…AMKF. A helical transmembrane segment spans residues 13-31; it reads NLLAGGFGGVCLVFVGHPL. Residues 32–73 lie on the Mitochondrial matrix side of the membrane; that stretch reads DTVKVRLQTQPPSLPGQPPMYSGTFDCFRKTLFREGIRGLYR. Residues 74–93 form a helical membrane-spanning segment; it reads GMAAPIIGVTPMFAVCFFGF. The Cytoplasmic segment spans residues 94 to 112; sequence GLGKKLQQKHPEDVLSYPQ. The helical transmembrane segment at 113–131 threads the bilayer; sequence LFAAGMLSGIFTTGIMTPG. The Mitochondrial matrix portion of the chain corresponds to 132–170; sequence ERIKCLLQIQASSGETKYTGTLDCAKKLYQEFGIRGIYK. 2 positions are modified to N6-acetyllysine: Lys-148 and Lys-157. Position 170 is an N6-acetyllysine; alternate (Lys-170). Lys-170 is subject to N6-succinyllysine; alternate. The helical transmembrane segment at 171-190 threads the bilayer; it reads GTVVTLMRDVPASGMYFMTY. Residues 191 to 211 lie on the Cytoplasmic side of the membrane; that stretch reads EWVKNIFTPEGKRVSELSVPR. The helical transmembrane segment at 212 to 230 threads the bilayer; it reads VLVAGGIAGIFNWAVAIPP. Residues 231 to 267 are Mitochondrial matrix-facing; that stretch reads DVLKSRFQTAPPGKYPNGFRDVLRELIPDEGVTSLYK. Residues 268 to 287 traverse the membrane as a helical segment; that stretch reads GFNAVMIRAFPANAACFLGF. The Cytoplasmic portion of the chain corresponds to 288–301; it reads EVAMKFLNWATPNL.

The protein belongs to the mitochondrial carrier (TC 2.A.29) family.

The protein resides in the mitochondrion inner membrane. The catalysed reaction is O-acetyl-(R)-carnitine(in) + (R)-carnitine(out) = O-acetyl-(R)-carnitine(out) + (R)-carnitine(in). It catalyses the reaction an O-acyl-(R)-carnitine(in) + (R)-carnitine(out) = an O-acyl-(R)-carnitine(out) + (R)-carnitine(in). It carries out the reaction O-propanoyl-(R)-carnitine(in) + (R)-carnitine(out) = O-propanoyl-(R)-carnitine(out) + (R)-carnitine(in). The enzyme catalyses O-hexadecanoyl-(R)-carnitine(in) + (R)-carnitine(out) = O-hexadecanoyl-(R)-carnitine(out) + (R)-carnitine(in). The catalysed reaction is O-octanoyl-(R)-carnitine(in) + (R)-carnitine(out) = O-octanoyl-(R)-carnitine(out) + (R)-carnitine(in). It catalyses the reaction (R)-carnitine(in) = (R)-carnitine(out). Its function is as follows. Mediates the electroneutral exchange of acylcarnitines (O-acyl-(R)-carnitine or L-acylcarnitine) of different acyl chain lengths (ranging from O-acetyl-(R)-carnitine to long-chain O-acyl-(R)-carnitines) with free carnitine ((R)-carnitine or L-carnitine) across the mitochondrial inner membrane, via a ping-pong mechanism. Key player in the mitochondrial oxidation pathway, it translocates the fatty acids in the form of acylcarnitines into the mitochondrial matrix, where the carnitine palmitoyltransferase 2 (CPT-2) activates them to undergo fatty acid beta-oxidation. Catalyzes the unidirectional transport (uniport) of carnitine at lower rates than the antiport (exchange). This chain is Mitochondrial carnitine/acylcarnitine carrier protein (SLC25A20), found in Macaca fascicularis (Crab-eating macaque).